A 175-amino-acid chain; its full sequence is NADH-ubiquinone oxidoreductase chain 6 (175 aa).

The next 6 membrane-spanning stretches (helical) occupy residues 1 to 21, 24 to 44, 51 to 71, 87 to 107, 112 to 132, and 148 to 168; these read MMYIVFIMSVLYVVGFIGFSS, SPVYGGMSLVVSGGLGCGIIM, LGLVVFLVYLGGMMVVFGYTI, VVLSAFLVGLLMEVFMVVWLF, ELVGFYFGGLESFVTLGEGGF, and CGFWFLAMAGWMLFVSIFIAT.

It belongs to the complex I subunit 6 family. Core subunit of respiratory chain NADH dehydrogenase (Complex I) which is composed of 45 different subunits.

Its subcellular location is the mitochondrion inner membrane. It carries out the reaction a ubiquinone + NADH + 5 H(+)(in) = a ubiquinol + NAD(+) + 4 H(+)(out). In terms of biological role, core subunit of the mitochondrial membrane respiratory chain NADH dehydrogenase (Complex I) which catalyzes electron transfer from NADH through the respiratory chain, using ubiquinone as an electron acceptor. Essential for the catalytic activity and assembly of complex I. This chain is NADH-ubiquinone oxidoreductase chain 6 (MT-ND6), found in Elephas maximus (Indian elephant).